We begin with the raw amino-acid sequence, 757 residues long: Myb-related protein A (757 aa).

HTH myb-type domains lie at 30–81, 82–137, and 138–188; these read KKIC…QKVL, NPEL…NPEV, and KKSS…RRKV. 3 DNA-binding regions (H-T-H motif) span residues 58-81, 110-133, and 161-184; these read WAFIASHLQNRSDFQCQHRWQKVL, WSLIAKHLKGRIGKQCRERWHNHL, and WAEIAKLLPGRTDNSIKNHWNSTM. Residues 187–209 are disordered; that stretch reads KVEQEGYLQDGTKSSSERTGSST. Polar residues predominate over residues 197-209; it reads GTKSSSERTGSST. The interval 235–300 is transcriptional activation domain; the sequence is IPVYQYASPE…RLSSQAGSLP (66 aa). The interval 303–558 is negative regulatory domain; sequence SGSFVMEDCV…IRRSLLGSTP (256 aa).

As to quaternary structure, component of the DREAM complex. As to expression, expressed ubiquitously.

It is found in the nucleus. Its function is as follows. Strong transcriptional activator; DNA-binding protein that specifically recognize the sequence 5'-YAAC[GT]G-3'. Could have a role in the proliferation and/or differentiation of neurogenic, spermatogenic and B-lymphoid cells. The chain is Myb-related protein A (MYBL1) from Gallus gallus (Chicken).